Reading from the N-terminus, the 201-residue chain is Small ribosomal subunit protein uS4 (201 aa).

The 61-residue stretch at 93-153 folds into the S4 RNA-binding domain; that stretch reads ARLDNVVYRM…EKSKSLEAID (61 aa).

The protein belongs to the universal ribosomal protein uS4 family. In terms of assembly, part of the 30S ribosomal subunit. Contacts protein S5. The interaction surface between S4 and S5 is involved in control of translational fidelity.

Its function is as follows. One of the primary rRNA binding proteins, it binds directly to 16S rRNA where it nucleates assembly of the body of the 30S subunit. With S5 and S12 plays an important role in translational accuracy. In Flavobacterium psychrophilum (strain ATCC 49511 / DSM 21280 / CIP 103535 / JIP02/86), this protein is Small ribosomal subunit protein uS4.